We begin with the raw amino-acid sequence, 499 residues long: Ribose import ATP-binding protein RbsA 1 (499 aa).

2 consecutive ABC transporter domains span residues Leu5 to Ile240 and Thr249 to Ser494. Gly37–Ser44 contributes to the ATP binding site.

This sequence belongs to the ABC transporter superfamily. Ribose importer (TC 3.A.1.2.1) family. As to quaternary structure, the complex is composed of an ATP-binding protein (RbsA), two transmembrane proteins (RbsC) and a solute-binding protein (RbsB).

Its subcellular location is the cell membrane. It carries out the reaction D-ribose(out) + ATP + H2O = D-ribose(in) + ADP + phosphate + H(+). Part of the ABC transporter complex RbsABC involved in ribose import. Responsible for energy coupling to the transport system. This Rubrobacter xylanophilus (strain DSM 9941 / JCM 11954 / NBRC 16129 / PRD-1) protein is Ribose import ATP-binding protein RbsA 1.